A 162-amino-acid chain; its full sequence is ATP-dependent Clp protease adapter protein CLPS1, chloroplastic (162 aa).

A chloroplast-targeting transit peptide spans M1–W58.

The protein belongs to the ClpS family.

Its subcellular location is the plastid. The protein localises to the chloroplast stroma. In terms of biological role, small adapter protein that modulate the activity of plastid Clp protease system (CLPC). Probably involved in substrate selection for plastid CLPC. The chain is ATP-dependent Clp protease adapter protein CLPS1, chloroplastic from Chlamydomonas reinhardtii (Chlamydomonas smithii).